We begin with the raw amino-acid sequence, 771 residues long: Myotubularin-related protein 10 (771 aa).

The Myotubularin phosphatase domain occupies 217 to 657; sequence FETYSDWDRE…THIKLWKLCY (441 aa). Phosphoserine occurs at positions 603 and 745.

Belongs to the protein-tyrosine phosphatase family. Non-receptor class myotubularin subfamily.

This chain is Myotubularin-related protein 10 (Mtmr10), found in Mus musculus (Mouse).